Here is a 159-residue protein sequence, read N- to C-terminus: 6,7-dimethyl-8-ribityllumazine synthase (159 aa).

5-amino-6-(D-ribitylamino)uracil contacts are provided by residues Phe-22, 57–59 (AVE), and 81–83 (AVI). 86–87 (GT) serves as a coordination point for (2S)-2-hydroxy-3-oxobutyl phosphate. His-89 (proton donor) is an active-site residue. Phe-114 serves as a coordination point for 5-amino-6-(D-ribitylamino)uracil. Arg-128 contacts (2S)-2-hydroxy-3-oxobutyl phosphate.

It belongs to the DMRL synthase family. As to quaternary structure, forms an icosahedral capsid composed of 60 subunits, arranged as a dodecamer of pentamers.

The enzyme catalyses (2S)-2-hydroxy-3-oxobutyl phosphate + 5-amino-6-(D-ribitylamino)uracil = 6,7-dimethyl-8-(1-D-ribityl)lumazine + phosphate + 2 H2O + H(+). It participates in cofactor biosynthesis; riboflavin biosynthesis; riboflavin from 2-hydroxy-3-oxobutyl phosphate and 5-amino-6-(D-ribitylamino)uracil: step 1/2. Catalyzes the formation of 6,7-dimethyl-8-ribityllumazine by condensation of 5-amino-6-(D-ribitylamino)uracil with 3,4-dihydroxy-2-butanone 4-phosphate. This is the penultimate step in the biosynthesis of riboflavin. This chain is 6,7-dimethyl-8-ribityllumazine synthase, found in Shewanella denitrificans (strain OS217 / ATCC BAA-1090 / DSM 15013).